The following is a 91-amino-acid chain: MSFDRQQVPAWRPGYRFQYEPAQKGHVLLYPEGMIKLNDSAGLIGGLIDGQRSVAAIIDELQQQFPGVPEVADDIEQFMEVARAEHWITLA.

This sequence belongs to the PqqD family. As to quaternary structure, monomer. Interacts with PqqE.

It participates in cofactor biosynthesis; pyrroloquinoline quinone biosynthesis. Functions as a PqqA binding protein and presents PqqA to PqqE, in the pyrroloquinoline quinone (PQQ) biosynthetic pathway. In Pseudomonas entomophila (strain L48), this protein is PqqA binding protein.